A 646-amino-acid polypeptide reads, in one-letter code: Lipoteichoic acid synthase (646 aa).

Over 1–7 (MSSQKKK) the chain is Cytoplasmic. A helical transmembrane segment spans residues 8 to 28 (ISLFAFFLLTVITITLKTYFS). Over 29-43 (YYVDFSLGVKGLVQN) the chain is Extracellular. The chain crosses the membrane as a helical span at residues 44 to 64 (LILLMNPYSLVALVLSVFLFF). Residues 65 to 68 (KGKK) are Cytoplasmic-facing. A helical transmembrane segment spans residues 69-89 (AFWFMFIGGFLLTFLLYANVV). Topologically, residues 90–119 (YFRFFSDFLTFSTLNQVGNVESMGGAVSAS) are extracellular. The helical transmembrane segment at 120 to 140 (FKWYDFVYFIDTLVYLFILIF) threads the bilayer. Over 141 to 153 (KTKWLDTKAFSKK) the chain is Cytoplasmic. Residues 154 to 174 (FVPVVMAASVALFFLNLAFAE) form a helical membrane-spanning segment. The Extracellular segment spans residues 175–646 (TDRPELLTRT…ETGPKANSKK (472 aa)). Positions 255 and 300 each coordinate Mn(2+). The active site involves Thr300. Position 416 (His416) interacts with substrate. The Mn(2+) site is built by Asp475 and His476. Over residues 623–638 (NPDFKKVNPSKYKYET) the composition is skewed to basic and acidic residues. The tract at residues 623–646 (NPDFKKVNPSKYKYETGPKANSKK) is disordered.

This sequence belongs to the LTA synthase family. In terms of processing, proteolytically cleaved.

It is found in the cell membrane. Its subcellular location is the secreted. Its pathway is cell wall biogenesis; lipoteichoic acid biosynthesis. In terms of biological role, catalyzes the polymerization of lipoteichoic acid (LTA) polyglycerol phosphate, a reaction that presumably uses phosphatidylglycerol (PG) as substrate. Is required for staphylococcal growth and cell division process. The chain is Lipoteichoic acid synthase (ltaS) from Staphylococcus aureus (strain bovine RF122 / ET3-1).